The primary structure comprises 752 residues: Protein WEAK CHLOROPLAST MOVEMENT UNDER BLUE LIGHT-like 2 (752 aa).

A Phosphoserine modification is found at S143. Coiled coils occupy residues 186–557 (ERRK…SRAS) and 596–651 (ELSK…KEAM). A disordered region spans residues 476–495 (KHDLSETRQRNREDTREEKC). Over residues 653–675 (KVEKARDGKVGMDHELRKWRSDN) the composition is skewed to basic and acidic residues. The disordered stretch occupies residues 653 to 733 (KVEKARDGKV…ETETKKKKKR (81 aa)). Positions 690-723 (KSKSALHQPTTFTFGEQASSSNVTPQASSSNVTP) are enriched in polar residues.

It belongs to the WEB family.

This Arabidopsis thaliana (Mouse-ear cress) protein is Protein WEAK CHLOROPLAST MOVEMENT UNDER BLUE LIGHT-like 2 (WEL2).